The chain runs to 523 residues: Leghemoglobin reductase (523 aa).

A mitochondrion-targeting transit peptide spans 1–30; that stretch reads MAMASLARRKAYAVVSSSRSSVFLTSLRGF. FAD is bound by residues 66 to 75, lysine 84, glycine 148, and 177 to 179; these read EKRGTLGGTC and TGS. A disulfide bond links cysteine 75 and cysteine 80. Residues 214–221, glutamate 237, valine 271, and glycine 306 contribute to the NAD(+) site; that span reads GAGYIGLE. FAD is bound by residues aspartate 347 and 353–356; that span reads MLAH. Catalysis depends on histidine 479, which acts as the Proton acceptor.

This sequence belongs to the class-I pyridine nucleotide-disulfide oxidoreductase family. As to quaternary structure, homodimer. FAD is required as a cofactor.

It is found in the mitochondrion. It carries out the reaction 2 Fe(III)-[leghemoglobin] + NADH = 2 Fe(II)-[leghemoglobin] + NAD(+) + H(+). The catalysed reaction is 2 Fe(III)-[leghemoglobin] + NADPH = 2 Fe(II)-[leghemoglobin] + NADP(+) + H(+). Its function is as follows. Reduces ferric leghemoglobin (Lb) to ferrous Lb. The protein is Leghemoglobin reductase (FLBR) of Vigna unguiculata (Cowpea).